A 319-amino-acid chain; its full sequence is Cytochrome f (319 aa).

The N-terminal stretch at 1 to 34 is a signal peptide; sequence MQNRNTYEWTKKMTRLISVLVMIHIITRTSISNA. 4 residues coordinate heme: Y35, C55, C58, and H59. The helical transmembrane segment at 285 to 305 threads the bilayer; that stretch reads VKGLLLFLASVILAQIFLVLK.

It belongs to the cytochrome f family. In terms of assembly, the 4 large subunits of the cytochrome b6-f complex are cytochrome b6, subunit IV (17 kDa polypeptide, petD), cytochrome f and the Rieske protein, while the 4 small subunits are PetG, PetL, PetM and PetN. The complex functions as a dimer. It depends on heme as a cofactor.

The protein localises to the plastid. It localises to the chloroplast thylakoid membrane. Its function is as follows. Component of the cytochrome b6-f complex, which mediates electron transfer between photosystem II (PSII) and photosystem I (PSI), cyclic electron flow around PSI, and state transitions. This is Cytochrome f from Pinus koraiensis (Korean pine).